A 289-amino-acid chain; its full sequence is Myoblast determination protein 1 homolog A (289 aa).

The 52-residue stretch at 95–146 (DRRKAATMRERRRLSKVNEAFETLKRYTSTNPNQRLPKVEILRNAIRYIESL) folds into the bHLH domain. A disordered region spans residues 165–212 (SGDSDASSPRSNCSDGMMDYNSPPCGSRRRNSYDSSFYSDSPNDSRLG). Composition is skewed to polar residues over residues 168-178 (SDASSPRSNCS) and 197-208 (YDSSFYSDSPND).

In terms of assembly, efficient DNA binding requires dimerization with another bHLH protein.

Its subcellular location is the nucleus. Functionally, may act as a transcriptional activator that promotes transcription of muscle-specific target genes and plays a role in muscle differentiation. This Xenopus laevis (African clawed frog) protein is Myoblast determination protein 1 homolog A (myod1-a).